Here is a 571-residue protein sequence, read N- to C-terminus: Septation ring formation regulator EzrA (571 aa).

The Extracellular portion of the chain corresponds to 1–3; the sequence is MYY. Residues 4 to 22 form a helical membrane-spanning segment; it reads MLIGFIIVVIAVISAGYIL. Over 23–571 the chain is Cytoplasmic; that stretch reads KRKHYQRINE…ESKVSVDDIE (549 aa). Coiled coils occupy residues 170–215, 248–299, 326–374, 400–437, and 478–529; these read EAKL…QMER, LAQM…TLEH, DALA…ASGE, NFAE…ERER, and RIAE…ENHF.

The protein belongs to the EzrA family.

It is found in the cell membrane. Its function is as follows. Negative regulator of FtsZ ring formation; modulates the frequency and position of FtsZ ring formation. Inhibits FtsZ ring formation at polar sites. Interacts either with FtsZ or with one of its binding partners to promote depolymerization. This chain is Septation ring formation regulator EzrA, found in Listeria innocua serovar 6a (strain ATCC BAA-680 / CLIP 11262).